We begin with the raw amino-acid sequence, 110 residues long: Iron-sulfur cluster assembly protein CyaY (110 aa).

Belongs to the frataxin family.

Involved in iron-sulfur (Fe-S) cluster assembly. May act as a regulator of Fe-S biogenesis. This is Iron-sulfur cluster assembly protein CyaY from Pseudomonas syringae pv. syringae (strain B728a).